Here is a 425-residue protein sequence, read N- to C-terminus: tRNA(Ile)-lysidine synthase (425 aa).

An ATP-binding site is contributed by 27–32; that stretch reads SGGLDS.

This sequence belongs to the tRNA(Ile)-lysidine synthase family.

Its subcellular location is the cytoplasm. The catalysed reaction is cytidine(34) in tRNA(Ile2) + L-lysine + ATP = lysidine(34) in tRNA(Ile2) + AMP + diphosphate + H(+). Functionally, ligates lysine onto the cytidine present at position 34 of the AUA codon-specific tRNA(Ile) that contains the anticodon CAU, in an ATP-dependent manner. Cytidine is converted to lysidine, thus changing the amino acid specificity of the tRNA from methionine to isoleucine. The protein is tRNA(Ile)-lysidine synthase of Streptococcus pneumoniae (strain Taiwan19F-14).